The chain runs to 163 residues: Glycine cleavage system H-like protein gcvH5, mitochondrial (163 aa).

The transit peptide at 1–23 directs the protein to the mitochondrion; sequence MFLFKTTNNLRKSLSNKFFCTRY. The Lipoyl-binding domain maps to 50–136; the sequence is IGTLGLTENG…MSKGWLCKIK (87 aa).

This sequence belongs to the GcvH family.

It localises to the mitochondrion. This chain is Glycine cleavage system H-like protein gcvH5, mitochondrial (gcvH5), found in Dictyostelium discoideum (Social amoeba).